A 243-amino-acid polypeptide reads, in one-letter code: tRNA (guanine-N(1)-)-methyltransferase (243 aa).

Residues Gly108 and 127–132 each bind S-adenosyl-L-methionine; that span reads LGDYVL.

The protein belongs to the RNA methyltransferase TrmD family. Homodimer.

It localises to the cytoplasm. The catalysed reaction is guanosine(37) in tRNA + S-adenosyl-L-methionine = N(1)-methylguanosine(37) in tRNA + S-adenosyl-L-homocysteine + H(+). Specifically methylates guanosine-37 in various tRNAs. The protein is tRNA (guanine-N(1)-)-methyltransferase of Streptococcus gordonii (strain Challis / ATCC 35105 / BCRC 15272 / CH1 / DL1 / V288).